The sequence spans 105 residues: Large ribosomal subunit protein eL42 (105 aa).

The segment at 23–61 is disordered; it reads KVTQYKKGKESKFAQGRRRYDRKQSGFGGQTKPIFRKKA.

It belongs to the eukaryotic ribosomal protein eL42 family.

This is Large ribosomal subunit protein eL42 from Caenorhabditis elegans.